Consider the following 421-residue polypeptide: MASTDSKQLYLFKKMLKELKSKKGKGTELISLYIPAGRRISDVAQHLREEMSQASNIKSKSTRKNVQSAIEAILQRLKLLKEPLEKGVVIFAGMVPRSGPGTEKMETYVIEPPEPIKTYIYRCDSEFYLEPLEEFLEDKDAYGVILVDRNEATIALVKGRNINILKKLTSGVPGKFKAGGQSARRLERLIDLAAHEFLQRVGQKANEQFLPLLQEKKLRGILVGGPGHTKNEFVEGDYLHHELKKIVLDTFDLCYTEEFGIRELLEKAAPLLKDVELMKEREAVQRFLKELIKEDGGLACYGEKEVLEALMMGAVDTLIVSEELEKYKVKIACNNCDYLEEKTVNKLELIKLEEELKNAQCPKCGGALSIVEEKDYIEYLSELCEQSGAKLVTVSSETEEGAMILNAFKGIAAILRYKIHQ.

This sequence belongs to the eukaryotic release factor 1 family. In terms of assembly, heterodimer of two subunits, one of which binds GTP.

The protein localises to the cytoplasm. In terms of biological role, directs the termination of nascent peptide synthesis (translation) in response to the termination codons UAA, UAG and UGA. In Methanocaldococcus jannaschii (strain ATCC 43067 / DSM 2661 / JAL-1 / JCM 10045 / NBRC 100440) (Methanococcus jannaschii), this protein is Peptide chain release factor subunit 1 (prf1).